The following is a 296-amino-acid chain: Protoheme IX farnesyltransferase (296 aa).

Topologically, residues 1–9 (MMFKQYLQV) are cytoplasmic. The chain crosses the membrane as a helical span at residues 10–28 (TKPGIIFGNLISVIGGFLL). The Periplasmic segment spans residues 29-37 (ASKGSIDYP). The helical transmembrane segment at 38 to 56 (LFIYTLVGVSLVVASGCVF) threads the bilayer. The Cytoplasmic segment spans residues 57 to 78 (NNFIDRDIDRKMERTKNRVLVK). Residues 79–97 (GLISPGVSLVYATLLGIAG) form a helical membrane-spanning segment. The Periplasmic segment spans residues 98-107 (FMLLWFGANP). The helical transmembrane segment at 108–126 (LACWLGVMGFVVYVGIYSL) threads the bilayer. Topologically, residues 127-197 (YMKRHSVYGT…YQAANIPVLP (71 aa)) are cytoplasmic. Residues 198 to 216 (VVKGISVAKNHITLYIIAF) form a helical membrane-spanning segment. Topologically, residues 217–228 (AVATLMLTLGGY) are periplasmic. The chain crosses the membrane as a helical span at residues 229-247 (AGYKYLVVAAAVSVWWLGM). Over 248-268 (ALRGYKVEDDKVWARKLFGFS) the chain is Cytoplasmic. Residues 269-287 (IIAITALSIMMSVDFMVPN) traverse the membrane as a helical segment. Residues 288–296 (SQSLLTYVW) lie on the Periplasmic side of the membrane.

This sequence belongs to the UbiA prenyltransferase family. Protoheme IX farnesyltransferase subfamily.

The protein localises to the cell inner membrane. It carries out the reaction heme b + (2E,6E)-farnesyl diphosphate + H2O = Fe(II)-heme o + diphosphate. Its pathway is porphyrin-containing compound metabolism; heme O biosynthesis; heme O from protoheme: step 1/1. Functionally, converts heme B (protoheme IX) to heme O by substitution of the vinyl group on carbon 2 of heme B porphyrin ring with a hydroxyethyl farnesyl side group. The polypeptide is Protoheme IX farnesyltransferase (Salmonella arizonae (strain ATCC BAA-731 / CDC346-86 / RSK2980)).